We begin with the raw amino-acid sequence, 421 residues long: Anhydromevalonate phosphate decarboxylase (421 aa).

Mn(2+) contacts are provided by N131 and E194. D240 functions as the Proton acceptor in the catalytic mechanism.

The protein belongs to the UbiD family. The cofactor is prenylated FMN. Requires Mn(2+) as cofactor.

The catalysed reaction is (2E)-3-methyl-5-phosphooxypent-2-enoate + H(+) = isopentenyl phosphate + CO2. Its pathway is isoprenoid biosynthesis; isopentenyl diphosphate biosynthesis via mevalonate pathway. Functionally, catalyzes the conversion of trans-anhydromevalonate 5-phosphate (tAHMP) into isopentenyl phosphate. Involved in the archaeal mevalonate (MVA) pathway, which provides fundamental precursors for isoprenoid biosynthesis, such as isopentenyl diphosphate (IPP) and dimethylallyl diphosphate (DMAPP). This Methanocaldococcus jannaschii (strain ATCC 43067 / DSM 2661 / JAL-1 / JCM 10045 / NBRC 100440) (Methanococcus jannaschii) protein is Anhydromevalonate phosphate decarboxylase.